The following is a 224-amino-acid chain: Oxalate oxidase 2 (224 aa).

An N-terminal signal peptide occupies residues 1–23 (MGYSKTLAVSLFAVLLLAPAVLA). Cys-33 and Cys-49 are disulfide-bonded. The 152-residue stretch at 63–214 (SKLAKAGNTS…ALRVEAGVVE (152 aa)) folds into the Cupin type-1 domain. Asn-70 and Asn-75 each carry an N-linked (GlcNAc...) asparagine glycan. 4 residues coordinate Mn(2+): His-111, His-113, Glu-118, and His-160.

This sequence belongs to the germin family. As to quaternary structure, oligomer (believed to be a pentamer but probably hexamer). In terms of processing, glycosylated. A form called G contains antennary GlcNAc residues, whereas a form called G' lacks antennary GlcNAc residues in its otherwise identical glycans. Root.

The protein localises to the secreted. It localises to the extracellular space. Its subcellular location is the apoplast. It is found in the cell wall. It carries out the reaction oxalate + O2 + 2 H(+) = H2O2 + 2 CO2. Functionally, releases hydrogen peroxide in the apoplast. May play an important role in several aspects of plant growth and defense mechanisms. The sequence is that of Oxalate oxidase 2 from Hordeum vulgare (Barley).